Consider the following 508-residue polypeptide: MTILIKNNNLQQLLSSWIKLSYSYTISGIQSDSRLVKPGYLFCVLKKKNINETNKHMIHAIKNGAKIILYDTKQKFKNGTLKKIINHVPIIYFFKLSKNLPQILKKYYHFENNFTLIGITGTNGKSTTTHIVSQWANLLNVKIGIMGTLGHGINNNLKKTDNTTESSANIHQFLYHMLKQNIKTFAIEISSHGIVQHRIEQLPFKIAILTNITPEHLDYHRTMDNYINAKKAFFFKYNINTLIINADDLIAKTWIKKLNHKNVITITTKDQNFNSISPKKWIHANKIIQKQNCTNIHFNSSWGHGILNSTLIGHFNVINILLALATLLELNYPITDLVKVCKYIKTISGRMEHIHIVNKPKVIIDYAHNTNGLKNLLSTLKEIFNKKKIWCIFGCGGDRDKTKRPYMGSIAEKMSDQVILTNDNPRNEHPLKIIKNILSGCKFKNKIRIIPNREHAIKFAVNNADKEDIIVVAGKGHEKYQIINNKYYHFSDHKIIKKLLNKKNYDFN.

Residue serine 33 coordinates UDP-N-acetyl-alpha-D-muramoyl-L-alanyl-D-glutamate. 121-127 (GTNGKST) contacts ATP. UDP-N-acetyl-alpha-D-muramoyl-L-alanyl-D-glutamate is bound by residues asparagine 162, 163-164 (TT), serine 190, glutamine 196, and arginine 198. An N6-carboxylysine modification is found at lysine 230. Meso-2,6-diaminopimelate-binding positions include arginine 399, 423–426 (DNPR), glycine 474, and glutamate 478. The Meso-diaminopimelate recognition motif signature appears at 423–426 (DNPR).

Belongs to the MurCDEF family. MurE subfamily. It depends on Mg(2+) as a cofactor. Carboxylation is probably crucial for Mg(2+) binding and, consequently, for the gamma-phosphate positioning of ATP.

The protein localises to the cytoplasm. The enzyme catalyses UDP-N-acetyl-alpha-D-muramoyl-L-alanyl-D-glutamate + meso-2,6-diaminopimelate + ATP = UDP-N-acetyl-alpha-D-muramoyl-L-alanyl-gamma-D-glutamyl-meso-2,6-diaminopimelate + ADP + phosphate + H(+). Its pathway is cell wall biogenesis; peptidoglycan biosynthesis. Catalyzes the addition of meso-diaminopimelic acid to the nucleotide precursor UDP-N-acetylmuramoyl-L-alanyl-D-glutamate (UMAG) in the biosynthesis of bacterial cell-wall peptidoglycan. This is UDP-N-acetylmuramoyl-L-alanyl-D-glutamate--2,6-diaminopimelate ligase from Buchnera aphidicola subsp. Baizongia pistaciae (strain Bp).